Reading from the N-terminus, the 391-residue chain is MILDFSWLPPEINSARIYAGAGSGPLFMAAAAWEGLAADLRASASSFDAVIAGLAAGPWSGPASVAMAGAAAPYVGWLSAAAGQAELSAGQATAAATAFEAALAATVHPAAVTANRVLLGALVATNILGQNTPAIAATEFDYVEMWAQDVGAMVGYHAGAAAVAETLTPFSVPPLDLAGLASQAGAQLTGMATSVSAALSPIAEGAVEGVPAVVAAAQSVAAGLPVDAALQVGQAAAYPASMLIGPMMQLAQMGTTANTAGLAGAEAAGLAAADVPTFAGDIASGTGLGGAGGLGAGMSAELGKARLVGAMSVPPTWEGSVPARMASSAMAGLGAMPAEVPAAGGPMGMMPMPMGMGGAGAGMPAGMMGRGGANPHVVQARPSVVPRVGIG.

Belongs to the mycobacterial PPE family.

This is an uncharacterized protein from Mycobacterium tuberculosis (strain CDC 1551 / Oshkosh).